The following is a 260-amino-acid chain: NH(3)-dependent NAD(+) synthetase (260 aa).

31–38 serves as a coordination point for ATP; the sequence is GLSGGLDS. Asp-37 contributes to the Mg(2+) binding site. Arg-112 is a binding site for deamido-NAD(+). An ATP-binding site is contributed by Thr-132. Position 137 (Glu-137) interacts with Mg(2+). 2 residues coordinate ATP: Lys-161 and Ser-183.

This sequence belongs to the NAD synthetase family. In terms of assembly, homodimer.

It catalyses the reaction deamido-NAD(+) + NH4(+) + ATP = AMP + diphosphate + NAD(+) + H(+). It functions in the pathway cofactor biosynthesis; NAD(+) biosynthesis; NAD(+) from deamido-NAD(+) (ammonia route): step 1/1. Functionally, catalyzes the ATP-dependent amidation of deamido-NAD to form NAD. Uses ammonia as a nitrogen source. This Helicobacter pylori (strain J99 / ATCC 700824) (Campylobacter pylori J99) protein is NH(3)-dependent NAD(+) synthetase.